Reading from the N-terminus, the 370-residue chain is Protein PAM71, chloroplastic (370 aa).

A disordered region spans residues M1–C38. A chloroplast-targeting transit peptide spans M1–R73. Low complexity predominate over residues S22–C38. The Stromal segment spans residues C74–R113. The helical transmembrane segment at V114 to A134 threads the bilayer. Residues A135–S161 lie on the Lumenal, thylakoid side of the membrane. A helical membrane pass occupies residues A162–L182. Over A183–A188 the chain is Stromal. The helical transmembrane segment at A189–L209 threads the bilayer. The Lumenal, thylakoid portion of the chain corresponds to G210 to D228. Residues L229 to L249 form a helical membrane-spanning segment. Over D250–N275 the chain is Stromal. A helical transmembrane segment spans residues G276–A296. Topologically, residues E297–P315 are lumenal, thylakoid. Residues L316–G336 traverse the membrane as a helical segment. The Stromal portion of the chain corresponds to G337–A348. A helical membrane pass occupies residues I349 to V369. Residue T370 is a topological domain, lumenal, thylakoid.

It belongs to the GDT1 family. Homodimer.

The protein resides in the plastid. The protein localises to the chloroplast membrane. It is found in the thylakoid. Mn(2+)/H(+) exchanger, which transport Mn(2+)from the chloroplast stroma into the acidic thylakoid lumen. Might be a chloroplast-localized Ca(2+)/H(+) antiporter. Regulates Ca(2+), Mn(2+) and pH homeostasis. Required for chloroplast development. In Arabidopsis thaliana (Mouse-ear cress), this protein is Protein PAM71, chloroplastic.